The chain runs to 400 residues: Phosphoglycerate kinase (400 aa).

Substrate-binding positions include 23-25, Arg-38, 61-64, Arg-120, and Arg-153; these read DLN and HFGR. ATP is bound by residues Lys-203, Glu-325, and 355 to 358; that span reads GGDT.

The protein belongs to the phosphoglycerate kinase family. Monomer.

Its subcellular location is the cytoplasm. The enzyme catalyses (2R)-3-phosphoglycerate + ATP = (2R)-3-phospho-glyceroyl phosphate + ADP. It participates in carbohydrate degradation; glycolysis; pyruvate from D-glyceraldehyde 3-phosphate: step 2/5. The polypeptide is Phosphoglycerate kinase (Agrobacterium fabrum (strain C58 / ATCC 33970) (Agrobacterium tumefaciens (strain C58))).